The chain runs to 306 residues: tRNA-cytidine(32) 2-sulfurtransferase (306 aa).

A PP-loop motif motif is present at residues 49-54; sequence SGGKDS. Cys124, Cys127, and Cys215 together coordinate [4Fe-4S] cluster.

It belongs to the TtcA family. As to quaternary structure, homodimer. Mg(2+) is required as a cofactor. Requires [4Fe-4S] cluster as cofactor.

The protein resides in the cytoplasm. It catalyses the reaction cytidine(32) in tRNA + S-sulfanyl-L-cysteinyl-[cysteine desulfurase] + AH2 + ATP = 2-thiocytidine(32) in tRNA + L-cysteinyl-[cysteine desulfurase] + A + AMP + diphosphate + H(+). The protein operates within tRNA modification. Catalyzes the ATP-dependent 2-thiolation of cytidine in position 32 of tRNA, to form 2-thiocytidine (s(2)C32). The sulfur atoms are provided by the cysteine/cysteine desulfurase (IscS) system. In Azoarcus sp. (strain BH72), this protein is tRNA-cytidine(32) 2-sulfurtransferase.